Consider the following 44-residue polypeptide: Cytochrome b559 subunit beta (44 aa).

A helical transmembrane segment spans residues 19 to 35 (WLSIHALAVPTIFFLGS). Position 23 (histidine 23) interacts with heme.

Belongs to the PsbE/PsbF family. Heterodimer of an alpha subunit and a beta subunit. PSII is composed of 1 copy each of membrane proteins PsbA, PsbB, PsbC, PsbD, PsbE, PsbF, PsbH, PsbI, PsbJ, PsbK, PsbL, PsbM, PsbT, PsbX, PsbY, PsbZ, Psb30/Ycf12, at least 3 peripheral proteins of the oxygen-evolving complex and a large number of cofactors. It forms dimeric complexes. Heme b serves as cofactor.

Its subcellular location is the plastid. The protein localises to the chloroplast thylakoid membrane. This b-type cytochrome is tightly associated with the reaction center of photosystem II (PSII). PSII is a light-driven water:plastoquinone oxidoreductase that uses light energy to abstract electrons from H(2)O, generating O(2) and a proton gradient subsequently used for ATP formation. It consists of a core antenna complex that captures photons, and an electron transfer chain that converts photonic excitation into a charge separation. The chain is Cytochrome b559 subunit beta from Tetradesmus obliquus (Green alga).